Reading from the N-terminus, the 671-residue chain is cGMP-dependent protein kinase 1 (671 aa).

The residue at position 2 (Ser2) is an N-acetylserine. Positions 2–59 (SELEEDFAKILMLKEERIKELEKRLSEKEEEIQELKRKLHKCQSVLPVPSTHIGPRTT) form a coiled coil. The required for dimerization stretch occupies residues 2-102 (SELEEDFAKI…LIKEAILDND (101 aa)). The tract at residues 9-44 (AKILMLKEERIKELEKRLSEKEEEIQELKRKLHKCQ) is leucine-zipper. An autoinhibitory domain region spans residues 50–75 (PSTHIGPRTTRAQGISAEPQTYRSFH). Phosphothreonine; by autocatalysis is present on Thr59. Residues 103–220 (FMKNLELSQI…EYMEFLKSVP (118 aa)) are cGMP-binding, high affinity. 3',5'-cyclic AMP-binding positions include 167-170 (GELA) and 177-178 (RT). 3',5'-cyclic GMP contacts are provided by residues 167-170 (GELA), 177-178 (RT), Arg282, 291-294 (GEKA), 301-302 (RT), and Tyr336. The tract at residues 221-341 (TFQSLPEEIL…SNKAYEDAEA (121 aa)) is cGMP-binding, low affinity. 3',5'-cyclic AMP contacts are provided by residues 291–294 (GEKA), 301–302 (RT), and Tyr336. Residues 360–619 (FNIIDTLGVG…VKDIQKHKWF (260 aa)) enclose the Protein kinase domain. Residues 366 to 374 (LGVGGFGRV) and Lys390 contribute to the ATP site. The active-site Proton acceptor is Asp484. Thr515 is subject to Phosphothreonine. The AGC-kinase C-terminal domain maps to 620–671 (EGFNWEGLRKGTLTPPIIPSVASPTDTSNFDSFPEDNDEPPPDDNSGWDIDF). The tract at residues 635–671 (PIIPSVASPTDTSNFDSFPEDNDEPPPDDNSGWDIDF) is disordered. The segment covering 652-661 (FPEDNDEPPP) has biased composition (acidic residues).

The protein belongs to the protein kinase superfamily. AGC Ser/Thr protein kinase family. cGMP subfamily. In terms of assembly, isoform alpha: parallel homodimer or heterodimer and also heterotetramer. Interacts directly with PPP1R12A. Non-covalent dimer of dimer of PRKG1-PRKG1 and PPP1R12A-PPP1R12A. This interaction targets PRKG1 to stress fibers to mediate smooth muscle cell relaxation and vasodilation in responses to rises in cGMP. Isoform beta: antiparallel homodimer. Part of cGMP kinase signaling complex at least composed of ACTA2/alpha-actin, CNN1/calponin H1, PLN/phospholamban, PRKG1 and ITPR1. Interacts with IRAG1. Forms a stable complex with ITPR1, IRAG1, and isoform beta of PRKG1. Interacts with TRPC7 (via ankyrin repeat domain). Isoform alpha interacts with RGS2. Interacts with GTF2I. Post-translationally, autophosphorylation increases kinase activity. 65 kDa monomer is produced by proteolytic cleavage. As to expression, primarily expressed in lung and placenta.

It is found in the cytoplasm. The enzyme catalyses L-seryl-[protein] + ATP = O-phospho-L-seryl-[protein] + ADP + H(+). It carries out the reaction L-threonyl-[protein] + ATP = O-phospho-L-threonyl-[protein] + ADP + H(+). With respect to regulation, in the absence of cGMP, PRKG1 activity is suppressed by autoinhibitory contacts. Its function is as follows. Serine/threonine protein kinase that acts as a key mediator of the nitric oxide (NO)/cGMP signaling pathway. GMP binding activates PRKG1, which phosphorylates serines and threonines on many cellular proteins. Numerous protein targets for PRKG1 phosphorylation are implicated in modulating cellular calcium, but the contribution of each of these targets may vary substantially among cell types. Proteins that are phosphorylated by PRKG1 regulate platelet activation and adhesion, smooth muscle contraction, cardiac function, gene expression, feedback of the NO-signaling pathway, and other processes involved in several aspects of the CNS like axon guidance, hippocampal and cerebellar learning, circadian rhythm and nociception. Smooth muscle relaxation is mediated through lowering of intracellular free calcium, by desensitization of contractile proteins to calcium, and by decrease in the contractile state of smooth muscle or in platelet activation. Regulates intracellular calcium levels via several pathways: phosphorylates IRAG1 and inhibits IP3-induced Ca(2+) release from intracellular stores, phosphorylation of KCNMA1 (BKCa) channels decreases intracellular Ca(2+) levels, which leads to increased opening of this channel. PRKG1 phosphorylates the canonical transient receptor potential channel (TRPC) family which inactivates the associated inward calcium current. Another mode of action of NO/cGMP/PKGI signaling involves PKGI-mediated inactivation of the Ras homolog gene family member A (RhoA). Phosphorylation of RHOA by PRKG1 blocks the action of this protein in myriad processes: regulation of RHOA translocation; decreasing contraction; controlling vesicle trafficking, reduction of myosin light chain phosphorylation resulting in vasorelaxation. Activation of PRKG1 by NO signaling also alters gene expression in a number of tissues. In smooth muscle cells, increased cGMP and PRKG1 activity influence expression of smooth muscle-specific contractile proteins, levels of proteins in the NO/cGMP signaling pathway, down-regulation of the matrix proteins osteopontin and thrombospondin-1 to limit smooth muscle cell migration and phenotype. Regulates vasodilator-stimulated phosphoprotein (VASP) functions in platelets and smooth muscle. This is cGMP-dependent protein kinase 1 (PRKG1) from Homo sapiens (Human).